The chain runs to 324 residues: Glyoxylate/hydroxypyruvate reductase B (324 aa).

Active-site residues include Arg237 and Glu266. His285 functions as the Proton donor in the catalytic mechanism.

The protein belongs to the D-isomer specific 2-hydroxyacid dehydrogenase family. GhrB subfamily. In terms of assembly, homodimer.

The protein localises to the cytoplasm. The catalysed reaction is glycolate + NADP(+) = glyoxylate + NADPH + H(+). It catalyses the reaction (R)-glycerate + NAD(+) = 3-hydroxypyruvate + NADH + H(+). The enzyme catalyses (R)-glycerate + NADP(+) = 3-hydroxypyruvate + NADPH + H(+). In terms of biological role, catalyzes the NADPH-dependent reduction of glyoxylate and hydroxypyruvate into glycolate and glycerate, respectively. This is Glyoxylate/hydroxypyruvate reductase B from Escherichia coli (strain ATCC 8739 / DSM 1576 / NBRC 3972 / NCIMB 8545 / WDCM 00012 / Crooks).